Consider the following 622-residue polypeptide: DNA mismatch repair protein MutL (622 aa).

The segment covering 399-414 has biased composition (basic and acidic residues); it reads SSQNFHPDENDYRAEE. The interval 399 to 422 is disordered; it reads SSQNFHPDENDYRAEEASPAEENP.

Belongs to the DNA mismatch repair MutL/HexB family.

This protein is involved in the repair of mismatches in DNA. It is required for dam-dependent methyl-directed DNA mismatch repair. May act as a 'molecular matchmaker', a protein that promotes the formation of a stable complex between two or more DNA-binding proteins in an ATP-dependent manner without itself being part of a final effector complex. This chain is DNA mismatch repair protein MutL, found in Phocaeicola vulgatus (strain ATCC 8482 / DSM 1447 / JCM 5826 / CCUG 4940 / NBRC 14291 / NCTC 11154) (Bacteroides vulgatus).